The primary structure comprises 156 residues: Small ribosomal subunit protein uS7 (156 aa).

The protein belongs to the universal ribosomal protein uS7 family. Part of the 30S ribosomal subunit. Contacts proteins S9 and S11.

In terms of biological role, one of the primary rRNA binding proteins, it binds directly to 16S rRNA where it nucleates assembly of the head domain of the 30S subunit. Is located at the subunit interface close to the decoding center, probably blocks exit of the E-site tRNA. This Chromohalobacter salexigens (strain ATCC BAA-138 / DSM 3043 / CIP 106854 / NCIMB 13768 / 1H11) protein is Small ribosomal subunit protein uS7.